A 336-amino-acid polypeptide reads, in one-letter code: uncharacterized protein (336 aa).

The disordered stretch occupies residues 196–222 (YKEGDDSNWDDFGSESEDDSKEAHSEE). Residues 201 to 215 (DSNWDDFGSESEDDS) show a composition bias toward acidic residues. The residue at position 211 (S211) is a Phosphoserine.

This is an uncharacterized protein from Schizosaccharomyces pombe (strain 972 / ATCC 24843) (Fission yeast).